Here is a 508-residue protein sequence, read N- to C-terminus: D-alanine--D-alanyl carrier protein ligase (508 aa).

152 to 153 contributes to the ATP binding site; sequence TS. D198 is a D-alanine binding site. 293–298 contributes to the ATP binding site; that stretch reads NTYGPT. D-alanine is bound at residue V302. ATP is bound by residues D384, 396-399, and K495; that span reads YRGR. Position 495 (K495) interacts with D-alanine.

It belongs to the ATP-dependent AMP-binding enzyme family. DltA subfamily.

It localises to the cytoplasm. The enzyme catalyses holo-[D-alanyl-carrier protein] + D-alanine + ATP = D-alanyl-[D-alanyl-carrier protein] + AMP + diphosphate. It participates in cell wall biogenesis; lipoteichoic acid biosynthesis. In terms of biological role, catalyzes the first step in the D-alanylation of lipoteichoic acid (LTA), the activation of D-alanine and its transfer onto the D-alanyl carrier protein (Dcp) DltC. In an ATP-dependent two-step reaction, forms a high energy D-alanyl-AMP intermediate, followed by transfer of the D-alanyl residue as a thiol ester to the phosphopantheinyl prosthetic group of the Dcp. D-alanylation of LTA plays an important role in modulating the properties of the cell wall in Gram-positive bacteria, influencing the net charge of the cell wall. This Lactiplantibacillus plantarum (strain ATCC BAA-793 / NCIMB 8826 / WCFS1) (Lactobacillus plantarum) protein is D-alanine--D-alanyl carrier protein ligase.